A 188-amino-acid polypeptide reads, in one-letter code: GMP synthase [glutamine-hydrolyzing] subunit A (188 aa).

In terms of domain architecture, Glutamine amidotransferase type-1 spans 2 to 188; it reads KVAVIYFGGQ…FKNFIKICRK (187 aa). C79 (nucleophile) is an active-site residue. Residues H166 and E168 contribute to the active site.

Heterodimer composed of a glutamine amidotransferase subunit (A) and a GMP-binding subunit (B).

It catalyses the reaction XMP + L-glutamine + ATP + H2O = GMP + L-glutamate + AMP + diphosphate + 2 H(+). It participates in purine metabolism; GMP biosynthesis; GMP from XMP (L-Gln route): step 1/1. In terms of biological role, catalyzes the synthesis of GMP from XMP. This is GMP synthase [glutamine-hydrolyzing] subunit A from Sulfolobus acidocaldarius (strain ATCC 33909 / DSM 639 / JCM 8929 / NBRC 15157 / NCIMB 11770).